A 571-amino-acid polypeptide reads, in one-letter code: PHD and RING finger domain-containing protein C126.07c (571 aa).

The RING-type 1; atypical zinc-finger motif lies at 18–79 (CIICLSNLPN…RVANTCPLCR (62 aa)). The segment at 122-170 (TCRCVICGRSDHAEVLLLCDGCDDAYHTYCLNMDAVPIEEFYCPNCVLL) adopts a PHD-type zinc-finger fold. The RING-type 2; degenerate zinc-finger motif lies at 125–168 (CVICGRSDHAEVLLLCDGCDDAYHTYCLNMDAVPIEEFYCPNCV). The span at 305 to 324 (ATEATISNPRPSSGRFQQTP) shows a compositional bias: polar residues. Positions 305–377 (ATEATISNPR…VLGNNSSSKS (73 aa)) are disordered. The segment covering 346-356 (RRQKRPTRRHI) has biased composition (basic residues). A compositionally biased stretch (polar residues) spans 359–377 (SNKSSGSSTVLGNNSSSKS).

Its subcellular location is the cytoplasm. The protein localises to the nucleus. In Schizosaccharomyces pombe (strain 972 / ATCC 24843) (Fission yeast), this protein is PHD and RING finger domain-containing protein C126.07c.